We begin with the raw amino-acid sequence, 136 residues long: Protein NrdI (136 aa).

Belongs to the NrdI family.

In terms of biological role, probably involved in ribonucleotide reductase function. In Erwinia tasmaniensis (strain DSM 17950 / CFBP 7177 / CIP 109463 / NCPPB 4357 / Et1/99), this protein is Protein NrdI.